A 401-amino-acid chain; its full sequence is MQPFGDAWSQRHLAGVVLAGSVLSIVGSLYMILGFFFLRECRSFRHKLILGLAVSDLLLALNFFIPSLSMVTGREISSPWNEGFCSANGFLMQLFFAQIDVWQISIALITLLMLSGPSMVLKWIRENVWAVWLFPWLVSLIAAFFAFGFWDYANVGGFCWLGSRNIRLYFNYIPRWIIILVCLVIYIAVYRLILHARRRANIQKTYRGRASDRAPPQPVTTTAPATNPESEKVNPDEISSGNGSSSLDTSRSGSSTGFTQTVHDPAVAGQIQTAAERAQEEAEQQKQVRKIAIQMISYPLAYAVLWAIPTIVMIIQVARGGEGVSIHVEGLAKMLLVFNGFVDAHVYGFNERTAMGWRQRIRPAAQEDDEEAAGTSGGVHEVVSRPEPTLKNPNVWQQNMV.

At 1–16 the chain is on the extracellular side; sequence MQPFGDAWSQRHLAGV. The chain crosses the membrane as a helical span at residues 17–37; sequence VLAGSVLSIVGSLYMILGFFF. At 38–47 the chain is on the cytoplasmic side; sequence LRECRSFRHK. Residues 48–68 form a helical membrane-spanning segment; that stretch reads LILGLAVSDLLLALNFFIPSL. The Extracellular segment spans residues 69 to 93; it reads SMVTGREISSPWNEGFCSANGFLMQ. C85 and C159 form a disulfide bridge. A helical transmembrane segment spans residues 94-114; the sequence is LFFAQIDVWQISIALITLLML. At 115–128 the chain is on the cytoplasmic side; it reads SGPSMVLKWIRENV. Residues 129-149 traverse the membrane as a helical segment; that stretch reads WAVWLFPWLVSLIAAFFAFGF. Residues 150–175 are Extracellular-facing; the sequence is WDYANVGGFCWLGSRNIRLYFNYIPR. The helical transmembrane segment at 176 to 196 threads the bilayer; it reads WIIILVCLVIYIAVYRLILHA. Topologically, residues 197–294 are cytoplasmic; that stretch reads RRRANIQKTY…QKQVRKIAIQ (98 aa). Residues 206-259 form a disordered region; that stretch reads YRGRASDRAPPQPVTTTAPATNPESEKVNPDEISSGNGSSSLDTSRSGSSTGFT. Over residues 239–257 the composition is skewed to low complexity; that stretch reads SSGNGSSSLDTSRSGSSTG. Residues 295 to 315 traverse the membrane as a helical segment; it reads MISYPLAYAVLWAIPTIVMII. The Extracellular segment spans residues 316–321; sequence QVARGG. The helical transmembrane segment at 322 to 342 threads the bilayer; sequence EGVSIHVEGLAKMLLVFNGFV. The Cytoplasmic portion of the chain corresponds to 343–401; the sequence is DAHVYGFNERTAMGWRQRIRPAAQEDDEEAAGTSGGVHEVVSRPEPTLKNPNVWQQNMV. Residues 362–401 form a disordered region; it reads RPAAQEDDEEAAGTSGGVHEVVSRPEPTLKNPNVWQQNMV. The segment covering 391 to 401 has biased composition (polar residues); sequence KNPNVWQQNMV.

The protein belongs to the G-protein coupled receptor 1 family. As to quaternary structure, interacts with ascaroside receptor GPR2; may form a functional heterodimer. Interacts with guanine nucleotide-binding protein alpha GPA2; to activate adenylate cyclase and positively regulate nematode trap formation.

It is found in the cell membrane. Its function is as follows. G protein-coupled receptor that senses nematode ascaroside pheromones and signals via adenylate cyclase to positively regulate trap formation for nematode capture. The chain is Ascaroside receptor GPR3 from Arthrobotrys oligospora (strain ATCC 24927 / CBS 115.81 / DSM 1491) (Nematode-trapping fungus).